The sequence spans 362 residues: Bifunctional nitrilase/nitrile hydratase NIT4 (362 aa).

The CN hydrolase domain maps to 31–307 (VRATVVQAST…EALITADLDL (277 aa)). Glu71 serves as the catalytic Proton acceptor. Lys162 (proton donor) is an active-site residue. Catalysis depends on Cys196, which acts as the Nucleophile.

The protein belongs to the carbon-nitrogen hydrolase superfamily. Nitrilase family.

It catalyses the reaction a nitrile + 2 H2O = a carboxylate + NH4(+). The catalysed reaction is 3-cyano-L-alanine + 2 H2O = L-aspartate + NH4(+). Its function is as follows. Highly specific for beta-cyano-L-alanine (Ala(CN)). Low activity with 3-phenylpropionitrile (PPN). Not associated with auxin production but may be involved in cyanide detoxification. The sequence is that of Bifunctional nitrilase/nitrile hydratase NIT4 (NIT4) from Oryza sativa subsp. japonica (Rice).